The chain runs to 580 residues: PTS system fructose-specific EIIB'BC component (580 aa).

2 consecutive PTS EIIB type-2 domains span residues 3-100 (MKIA…QAAE) and 124-221 (KKIV…NAFA). Residues C11 and C132 each act as phosphocysteine intermediate; for EIIB activity in the active site. Phosphocysteine; by EIIA is present on residues C11 and C132. The PTS EIIC type-2 domain maps to 244–579 (VYKHLMTGVS…KKSAQAKAVA (336 aa)). Transmembrane regions (helical) follow at residues 254 to 274 (HMLP…VFGI), 292 to 312 (GGSA…FSIA), 322 to 342 (IGGM…VAGF), 367 to 387 (ILII…YVVG), 408 to 428 (NAIL…GGPV), 448 to 468 (MAAI…ATFI), 480 to 500 (AGKA…IPFA), 507 to 527 (VIPA…LFGA), and 537 to 557 (FVLL…AIAV).

It is found in the cell inner membrane. It catalyses the reaction D-fructose(out) + N(pros)-phospho-L-histidyl-[protein] = D-fructose 1-phosphate(in) + L-histidyl-[protein]. In terms of biological role, the phosphoenolpyruvate-dependent sugar phosphotransferase system (sugar PTS), a major carbohydrate active transport system, catalyzes the phosphorylation of incoming sugar substrates concomitantly with their translocation across the cell membrane. The enzyme II FruAB PTS system is involved in fructose transport. The protein is PTS system fructose-specific EIIB'BC component of Vibrio cholerae serotype O1 (strain ATCC 39315 / El Tor Inaba N16961).